The primary structure comprises 164 residues: 5-formyltetrahydrofolate cyclo-ligase (164 aa).

3–7 contacts ATP; the sequence is KNALR. Residues E50 and E55 each coordinate substrate. Residue 115 to 123 participates in ATP binding; that stretch reads RLGFGKGYY. D124 contributes to the Mg(2+) binding site. Residues R125 and W153 each contribute to the ATP site. D154 is a Mg(2+) binding site.

This sequence belongs to the 5-formyltetrahydrofolate cyclo-ligase family. As to quaternary structure, monomer or homodimer. Mg(2+) serves as cofactor. The cofactor is Mn(2+). Ca(2+) is required as a cofactor. It depends on Zn(2+) as a cofactor. Requires Fe(2+) as cofactor. Co(2+) serves as cofactor. The cofactor is Cu(2+).

The protein localises to the cytoplasm. The enzyme catalyses (6S)-5-formyl-5,6,7,8-tetrahydrofolate + ATP = (6R)-5,10-methenyltetrahydrofolate + ADP + phosphate. Its function is as follows. Involved in folate metabolism. Catalyzes the irreversible conversion of 5-formyltetrahydrofolate (5-FTHF) to yield 5,10-methenyltetrahydrofolate. This Mycoplasma pneumoniae (strain ATCC 29342 / M129 / Subtype 1) (Mycoplasmoides pneumoniae) protein is 5-formyltetrahydrofolate cyclo-ligase.